The chain runs to 419 residues: UDP-N-acetylglucosamine 1-carboxyvinyltransferase (419 aa).

22–23 (KN) contributes to the phosphoenolpyruvate binding site. Position 92 (Arg-92) interacts with UDP-N-acetyl-alpha-D-glucosamine. The active-site Proton donor is Cys-116. Cys-116 is modified (2-(S-cysteinyl)pyruvic acid O-phosphothioketal). Asp-307 and Val-329 together coordinate UDP-N-acetyl-alpha-D-glucosamine.

This sequence belongs to the EPSP synthase family. MurA subfamily.

The protein localises to the cytoplasm. The catalysed reaction is phosphoenolpyruvate + UDP-N-acetyl-alpha-D-glucosamine = UDP-N-acetyl-3-O-(1-carboxyvinyl)-alpha-D-glucosamine + phosphate. The protein operates within cell wall biogenesis; peptidoglycan biosynthesis. In terms of biological role, cell wall formation. Adds enolpyruvyl to UDP-N-acetylglucosamine. The protein is UDP-N-acetylglucosamine 1-carboxyvinyltransferase of Pseudothermotoga lettingae (strain ATCC BAA-301 / DSM 14385 / NBRC 107922 / TMO) (Thermotoga lettingae).